A 387-amino-acid polypeptide reads, in one-letter code: Succinate--CoA ligase [ADP-forming] subunit beta (387 aa).

Positions 9 to 236 (RDLFEKYGVP…KAAADPLEAK (228 aa)) constitute an ATP-grasp domain. ATP-binding positions include K45, 52 to 54 (GRG), A94, and E99. The Mg(2+) site is built by N191 and D205. Residues N256 and 318 to 320 (GIT) contribute to the substrate site.

Belongs to the succinate/malate CoA ligase beta subunit family. In terms of assembly, heterotetramer of two alpha and two beta subunits. Mg(2+) serves as cofactor.

It catalyses the reaction succinate + ATP + CoA = succinyl-CoA + ADP + phosphate. It carries out the reaction GTP + succinate + CoA = succinyl-CoA + GDP + phosphate. It participates in carbohydrate metabolism; tricarboxylic acid cycle; succinate from succinyl-CoA (ligase route): step 1/1. Succinyl-CoA synthetase functions in the citric acid cycle (TCA), coupling the hydrolysis of succinyl-CoA to the synthesis of either ATP or GTP and thus represents the only step of substrate-level phosphorylation in the TCA. The beta subunit provides nucleotide specificity of the enzyme and binds the substrate succinate, while the binding sites for coenzyme A and phosphate are found in the alpha subunit. This is Succinate--CoA ligase [ADP-forming] subunit beta from Leifsonia xyli subsp. xyli (strain CTCB07).